We begin with the raw amino-acid sequence, 262 residues long: ATP synthase subunit a (262 aa).

The next 7 helical transmembrane spans lie at 30–50 (ITSLTNIAILFIIGLLVLTIF), 64–84 (WNIVLETWVASILGIVKDQIG), 91–111 (LIYFPLIFTFFSFVFISNILG), 123–143 (ISVTLGLSIAIMIGVTLIGFS), 149–169 (FFSLFVPKGTPLALVPLLVLI), 195–215 (LFGVISMLSVSACMAVSSILL), and 220–240 (IGLPLAVLVVLYGLELLVALL).

The protein belongs to the ATPase A chain family. In terms of assembly, F-type ATPases have 2 components, CF(1) - the catalytic core - and CF(0) - the membrane proton channel. CF(1) has five subunits: alpha(3), beta(3), gamma(1), delta(1), epsilon(1). CF(0) has three main subunits: a, b and c.

It is found in the mitochondrion inner membrane. Its function is as follows. Mitochondrial membrane ATP synthase (F(1)F(0) ATP synthase or Complex V) produces ATP from ADP in the presence of a proton gradient across the membrane which is generated by electron transport complexes of the respiratory chain. F-type ATPases consist of two structural domains, F(1) - containing the extramembraneous catalytic core and F(0) - containing the membrane proton channel, linked together by a central stalk and a peripheral stalk. During catalysis, ATP synthesis in the catalytic domain of F(1) is coupled via a rotary mechanism of the central stalk subunits to proton translocation. Key component of the proton channel; it may play a direct role in the translocation of protons across the membrane. This Allomyces arbusculus (Aquatic fungus) protein is ATP synthase subunit a (ATP6).